A 136-amino-acid polypeptide reads, in one-letter code: UPF0213 protein AHA_3736 (136 aa).

The region spanning 17 to 92 (SHWFIYMVRT…KQQSKAFKEQ (76 aa)) is the GIY-YIG domain. The interval 114-136 (QKRPRYAAAKEGSDNRECQRQVD) is disordered. The span at 124 to 136 (EGSDNRECQRQVD) shows a compositional bias: basic and acidic residues.

Belongs to the UPF0213 family.

This Aeromonas hydrophila subsp. hydrophila (strain ATCC 7966 / DSM 30187 / BCRC 13018 / CCUG 14551 / JCM 1027 / KCTC 2358 / NCIMB 9240 / NCTC 8049) protein is UPF0213 protein AHA_3736.